The following is a 234-amino-acid chain: MLTYETWEENVVSFSEEDETKGALSVLNWAYKEYKDEVVYACSFGVEGMVLLHIINQVNPSAKVVFLDTNVHFQETYELIRKVRERFPSLNIIEKQPELTLDEQAKLHGEKLWESNPNLCCKIRKILPLEKSLVVEKAWISGLRREQSETRKHTKFINQDHRFQSIKVCPLIHWTWKEVWRYVYKHSLPYNPLHDVGYPSIGCEKCTLPVGDGGDSRDGRWAGKVKTECGLHYQ.

C120, C121, C203, and C206 together coordinate [4Fe-4S] cluster. C229 functions as the Nucleophile; cysteine thiosulfonate intermediate in the catalytic mechanism.

This sequence belongs to the PAPS reductase family. CysH subfamily. Requires [4Fe-4S] cluster as cofactor.

It is found in the cytoplasm. It catalyses the reaction [thioredoxin]-disulfide + sulfite + AMP + 2 H(+) = adenosine 5'-phosphosulfate + [thioredoxin]-dithiol. The protein operates within sulfur metabolism; hydrogen sulfide biosynthesis; sulfite from sulfate. In terms of biological role, catalyzes the formation of sulfite from adenosine 5'-phosphosulfate (APS) using thioredoxin as an electron donor. In Bacillus cereus (strain ATCC 14579 / DSM 31 / CCUG 7414 / JCM 2152 / NBRC 15305 / NCIMB 9373 / NCTC 2599 / NRRL B-3711), this protein is Adenosine 5'-phosphosulfate reductase.